Here is a 58-residue protein sequence, read N- to C-terminus: Large ribosomal subunit protein uL24 (58 aa).

The protein belongs to the universal ribosomal protein uL24 family. In terms of assembly, part of the 50S ribosomal subunit.

In terms of biological role, one of two assembly initiator proteins, it binds directly to the 5'-end of the 23S rRNA, where it nucleates assembly of the 50S subunit. Functionally, one of the proteins that surrounds the polypeptide exit tunnel on the outside of the subunit. The chain is Large ribosomal subunit protein uL24 (rplX) from Spiroplasma citri.